Here is a 384-residue protein sequence, read N- to C-terminus: NADH-ubiquinone oxidoreductase chain 5 (384 aa).

Helical transmembrane passes span 12 to 32 (FYFL…FLLM), 50 to 70 (IVMT…VLLI), 92 to 112 (ILLV…PNLI), 113 to 133 (SILL…IYFQ), 153 to 173 (VALL…YIFY), 183 to 203 (MMII…QIPF), 215 to 235 (TPVS…YLLI), 244 to 264 (WWMA…AGLG), 274 to 293 (IIAL…LSMG), 298 to 320 (AFFH…GSII), 343 to 363 (CSCF…AGFY), and 364 to 384 (SKDL…SFFL).

This sequence belongs to the complex I subunit 5 family.

The protein localises to the mitochondrion inner membrane. The catalysed reaction is a ubiquinone + NADH + 5 H(+)(in) = a ubiquinol + NAD(+) + 4 H(+)(out). Core subunit of the mitochondrial membrane respiratory chain NADH dehydrogenase (Complex I) that is believed to belong to the minimal assembly required for catalysis. Complex I functions in the transfer of electrons from NADH to the respiratory chain. The immediate electron acceptor for the enzyme is believed to be ubiquinone. The polypeptide is NADH-ubiquinone oxidoreductase chain 5 (ND5) (Anopheles arabiensis (Mosquito)).